A 1452-amino-acid chain; its full sequence is ABC multidrug transporter A (1452 aa).

The tract at residues 1–20 (MNESHEAGKNSSTNVEEREE) is disordered. N-linked (GlcNAc...) asparagine glycans are attached at residues N2, N10, N228, N287, and N311. In terms of domain architecture, ABC transporter 1 spans 110-363 (LKTLSLARIA…FLQMGFVCPD (254 aa)). 6 helical membrane-spanning segments follow: residues 474 to 494 (VTIS…SIFY), 508 to 528 (ALLF…MLTL), 554 to 574 (MIMD…VLYF), 583 to 603 (GAFF…SMFF), 616 to 636 (VLPF…FAIP), and 725 to 745 (IGVI…ATDF). Positions 802 to 1044 (FQWKDVCFDI…ILIDYFVRNG (243 aa)) constitute an ABC transporter 2 domain. Position 838–845 (838–845 (GVSGAGKT)) interacts with ATP. Transmembrane regions (helical) follow at residues 1153–1173 (ALCV…PNTI), 1183–1203 (IFML…HFVA), 1223–1243 (FLIA…VLMF), 1271–1291 (LMIW…IAAF), and 1297–1317 (AGNL…VLAT). N-linked (GlcNAc...) asparagine glycosylation is found at N1350, N1365, and N1391. Residues 1418–1438 (FGLMWVFIVFNIFAACSLYWW) traverse the membrane as a helical segment.

This sequence belongs to the ABC transporter superfamily. ABCG family. PDR (TC 3.A.1.205) subfamily.

It is found in the membrane. ABC transporter that seems not to be involved in the efflux of toxic substances, at least not the classical compounds such as itraconazole, amphotericin B, voriconazole, posaconazole, ravuconazole, or echinocandins. This Aspergillus fumigatus (Neosartorya fumigata) protein is ABC multidrug transporter A.